The primary structure comprises 153 residues: Ribosomal RNA large subunit methyltransferase H (153 aa).

Leucine 71 and glycine 102 together coordinate S-adenosyl-L-methionine.

It belongs to the RNA methyltransferase RlmH family. Homodimer.

It is found in the cytoplasm. It carries out the reaction pseudouridine(1915) in 23S rRNA + S-adenosyl-L-methionine = N(3)-methylpseudouridine(1915) in 23S rRNA + S-adenosyl-L-homocysteine + H(+). Specifically methylates the pseudouridine at position 1915 (m3Psi1915) in 23S rRNA. This chain is Ribosomal RNA large subunit methyltransferase H, found in Anaeromyxobacter dehalogenans (strain 2CP-1 / ATCC BAA-258).